The sequence spans 169 residues: Nucleoside diphosphate kinase 3 (169 aa).

ADP-binding residues include Lys29, Arg105, Thr111, Arg122, Val129, and Asn132. Residue His135 is the Pros-phosphohistidine intermediate of the active site.

This sequence belongs to the NDK family. Homohexamer. Interacts (via its N-terminal region) with KAT5; this interaction enables recruitment of NME3 at DNA damage sites where it plays a role in the repair of DNA. Found in association with several ciliary nephronophthisis proteins, including NEK8, CEP164, ANKS6. Requires Mg(2+) as cofactor.

It localises to the mitochondrion outer membrane. The protein localises to the cytoplasm. It is found in the cytoskeleton. The protein resides in the cilium basal body. It catalyses the reaction a 2'-deoxyribonucleoside 5'-diphosphate + ATP = a 2'-deoxyribonucleoside 5'-triphosphate + ADP. The enzyme catalyses a ribonucleoside 5'-diphosphate + ATP = a ribonucleoside 5'-triphosphate + ADP. Functionally, catalyzes the phosphorylation of ribonucleosides and deoxyribonucleoside diphosphates, other than ATP, into the corresponding triphosphates with ATP as the major phosphate donor. The ATP gamma phosphate is transferred to the nucleoside diphosphate beta phosphate via a ping-pong mechanism, using a phosphorylated active-site intermediate. Through the catalyzed exchange of gamma-phosphate between di- and triphosphonucleosides participates in regulation of intracellular nucleotide homeostasis. Inhibits granulocyte differentiation. May be required for ciliary function during renal development. In terms of biological role, independently of its kinase activity, facilitates mitochondrial tethering prior to membrane fusion through its direct membrane-binding and hexamerization. Implicated in repair of both single- and double-stranded breaks in DNA through its association with the ribonucleotide reductase complex (RNR complex) via its interaction with the histone acetyltransferase KAT5, this interaction enables recruitment of NME3 at DNA damage sites where it plays a role in the repair of DNA, independently of its kinase activity. The polypeptide is Nucleoside diphosphate kinase 3 (Homo sapiens (Human)).